A 447-amino-acid chain; its full sequence is Alkylglycerol monooxygenase (447 aa).

2 helical membrane passes run 43–63 (ATPFFIFLILLELVVSWILKG) and 111–131 (WDSPWTWYLTFLGVDFGYYWF). A Fatty acid hydroxylase domain is found at 118–249 (YLTFLGVDFG…LIIWDRIFGT (132 aa)). The Histidine box-1 motif lies at 132 to 136 (HRMAH). The short motif at 145 to 149 (HQAHH) is the Histidine box-2 element. Residues 170-190 (SWVFYCPLALFVPPSVFAVHI) traverse the membrane as a helical segment. The Histidine box-3 motif lies at 221 to 225 (HRVHH). A run of 3 helical transmembrane segments spans residues 334-354 (FLKIYAVLQFAVMLVFYEETF), 363-383 (VTILLRICFIILTLTSIGFLL), and 413-433 (IESLSFAFEIFFSVCIAFWGV).

The protein belongs to the sterol desaturase family. TMEM195 subfamily. Requires Fe cation as cofactor.

The protein localises to the endoplasmic reticulum membrane. The catalysed reaction is 1-O-(1,2-saturated-alkyl)-sn-glycerol + (6R)-L-erythro-5,6,7,8-tetrahydrobiopterin + O2 = a 1-(1-hydroxyalkyl)-sn-glycerol + (6R)-L-erythro-6,7-dihydrobiopterin + H2O. In terms of biological role, glyceryl-ether monooxygenase that cleaves the O-alkyl bond of ether lipids. Ether lipids are essential components of brain membranes. In Rattus norvegicus (Rat), this protein is Alkylglycerol monooxygenase (Agmo).